Reading from the N-terminus, the 195-residue chain is uncharacterized protein (195 aa).

A run of 2 helical transmembrane segments spans residues 13–32 (VIGL…FLVA) and 42–64 (LSNS…TILV).

The protein localises to the cell membrane. This is an uncharacterized protein from Archaeoglobus fulgidus (strain ATCC 49558 / DSM 4304 / JCM 9628 / NBRC 100126 / VC-16).